The sequence spans 346 residues: Protein RecA (346 aa).

64 to 71 (GPESSGKT) provides a ligand contact to ATP.

The protein belongs to the RecA family.

It localises to the cytoplasm. Functionally, can catalyze the hydrolysis of ATP in the presence of single-stranded DNA, the ATP-dependent uptake of single-stranded DNA by duplex DNA, and the ATP-dependent hybridization of homologous single-stranded DNAs. It interacts with LexA causing its activation and leading to its autocatalytic cleavage. The chain is Protein RecA from Bacillus pumilus (strain SAFR-032).